A 660-amino-acid polypeptide reads, in one-letter code: Pro-secreted protein ORF2 (660 aa).

The signal sequence occupies residues 1-23 (MRPRAVLLLLFVLLPMLPAPPAG). Disordered stretches follow at residues 19-43 (APPA…GFWG) and 64-125 (ADVV…VPDV). Residues 28–33 (RRRGRR) carry the Nuclear localization signal motif. Over residues 93–124 (RPSTAPRRRSAPAGAAPLTAVSPAPDTAPVPD) the composition is skewed to low complexity. Asn137 and Asn310 each carry an N-linked (GlcNAc...) asparagine; by host glycan. The tract at residues 368-394 (IALTLFNLADTLLGGLPTELISSAGGQ) is particle formation. N-linked (GlcNAc...) asparagine; by host glycosylation is present at Asn562. The oligomerization stretch occupies residues 585–610 (TTSLGAGPTSISAVGVLAPHSALAVL).

This sequence belongs to the hepevirus capsid protein family. In terms of assembly, homodimer. As to quaternary structure, self-assembles to form the capsid. The capsid is dominated by dimers that define the 30 morphological units. Interacts with phosphorylated protein ORF3. Interacts with host TMEM134. Interacts with host ASGR1 and ASGR2; these interactions facilitate infection of host hepatocytes. Post-translationally, cleaved by host protease in the N-terminus. In terms of processing, N-glycosylated. Not N-glycosylated. The C-terminus of the capsid protein ORF2 is truncated in non-enveloped virions shedded in feces, probably due to host proteases.

The protein resides in the secreted. It is found in the virion. Its subcellular location is the host cytoplasm. The protein localises to the host endoplasmic reticulum. It localises to the host Golgi apparatus. The protein resides in the host cell surface. It is found in the host nucleus. Its function is as follows. Plays a role in the inhibition of host antibody-mediated neutralization without blocking viral cell entry. In terms of biological role, forms an icosahedral capsid with a T=1 symmetry and a 34 nm diameter. The capsid is composed of 60 copies linked to each other. Binds to the 5' end of the genomic RNA to mediate genome encapsidation. Binds to heparin surface proteoglycans (HSPGs) to mediate viral entry. Additionally, the interactions with host ASGR1 and ASGR2 facilitate viral infection of hepatocytes. Inhibits IFN production by blocking host TBK1-induced IRF3 phosphorylation. The nuclear form probably modulates host gene expression. In Hepatitis E virus genotype 3 (isolate Swine/United States/swUS1) (HEV-3), this protein is Pro-secreted protein ORF2.